The sequence spans 85 residues: RDS3 complex subunit 10 (85 aa).

Belongs to the SF3b complex composed of CUS1, HSH49, HSH155, RCP1, RDS3 and RSE1.

Its subcellular location is the nucleus. Its function is as follows. Involved in pre-mRNA splicing. Required for the SF3b integrity and prespliceosome assembly. In Saccharomyces cerevisiae (strain ATCC 204508 / S288c) (Baker's yeast), this protein is RDS3 complex subunit 10 (YSF3).